The chain runs to 392 residues: Major outer membrane protein P.IA (392 aa).

Residues M1–A19 form the signal peptide.

It belongs to the Gram-negative porin family. As to quaternary structure, homotrimer.

It localises to the cell outer membrane. Functionally, serves as a slightly cation selective porin. Major antigen on the gonococcal cell surface and it may have pathogenic properties in addition to its porin activity. In Neisseria meningitidis serogroup B (strain ATCC BAA-335 / MC58), this protein is Major outer membrane protein P.IA (porA).